A 218-amino-acid chain; its full sequence is Pyridoxine/pyridoxamine 5'-phosphate oxidase (218 aa).

Residues 14–17 and lysine 72 each bind substrate; that span reads RREY. FMN contacts are provided by residues 67-72, 82-83, arginine 88, lysine 89, and glutamine 111; these read RIVLLK and YT. Substrate-binding residues include tyrosine 129, arginine 133, and serine 137. FMN contacts are provided by residues 146–147 and tryptophan 191; that span reads QS. 197 to 199 is a substrate binding site; it reads RLH. An FMN-binding site is contributed by arginine 201.

This sequence belongs to the pyridoxamine 5'-phosphate oxidase family. In terms of assembly, homodimer. Requires FMN as cofactor.

The enzyme catalyses pyridoxamine 5'-phosphate + O2 + H2O = pyridoxal 5'-phosphate + H2O2 + NH4(+). It carries out the reaction pyridoxine 5'-phosphate + O2 = pyridoxal 5'-phosphate + H2O2. It participates in cofactor metabolism; pyridoxal 5'-phosphate salvage; pyridoxal 5'-phosphate from pyridoxamine 5'-phosphate: step 1/1. It functions in the pathway cofactor metabolism; pyridoxal 5'-phosphate salvage; pyridoxal 5'-phosphate from pyridoxine 5'-phosphate: step 1/1. Its function is as follows. Catalyzes the oxidation of either pyridoxine 5'-phosphate (PNP) or pyridoxamine 5'-phosphate (PMP) into pyridoxal 5'-phosphate (PLP). The polypeptide is Pyridoxine/pyridoxamine 5'-phosphate oxidase (Cronobacter sakazakii (strain ATCC BAA-894) (Enterobacter sakazakii)).